Reading from the N-terminus, the 167-residue chain is U-scoloptoxin-Er5c (167 aa).

The N-terminal stretch at 1-22 (MKTNCEFPLLCLLIVLVANVEG) is a signal peptide. Positions 23–94 (EVEDTGLKMV…KRLWRNWERR (72 aa)) are excised as a propeptide. RLWRNWE repeat units lie at residues 34–40 (RLWRNWE), 61–67 (RLWRNWE), and 86–92 (RLWRNWE). Glutamine 95 is subject to Pyrrolidone carboxylic acid. Residues 107 to 113 (ELWRNWE) form an RLWRNWE 4; approximate repeat. Residues 112–118 (WEDLKRR) constitute a propeptide that is removed on maturation. A Pyrrolidone carboxylic acid modification is found at glutamine 119. The stretch at 134–140 (RLWRNWE) is one RLWRNWE 5 repeat. Positions 139-167 (WEDNHATLRKRSADSLSRQKRLGRERGKE) are excised as a propeptide. Residues 147-167 (RKRSADSLSRQKRLGRERGKE) are disordered.

It belongs to the scoloptoxin-08 family. Expressed by the venom gland.

The protein resides in the secreted. The polypeptide is U-scoloptoxin-Er5c (Ethmostigmus rubripes (Giant centipede)).